The following is a 333-amino-acid chain: Bacteriocin helveticin-J (333 aa).

This heat-sensitive bacteriocin inhibits the growth of closely related Lactobacillus species. This chain is Bacteriocin helveticin-J (hlv), found in Lactobacillus helveticus (Lactobacillus suntoryeus).